A 309-amino-acid chain; its full sequence is Methionyl-tRNA formyltransferase (309 aa).

Residue 112 to 115 (SLLP) participates in (6S)-5,6,7,8-tetrahydrofolate binding.

The protein belongs to the Fmt family.

The catalysed reaction is L-methionyl-tRNA(fMet) + (6R)-10-formyltetrahydrofolate = N-formyl-L-methionyl-tRNA(fMet) + (6S)-5,6,7,8-tetrahydrofolate + H(+). In terms of biological role, attaches a formyl group to the free amino group of methionyl-tRNA(fMet). The formyl group appears to play a dual role in the initiator identity of N-formylmethionyl-tRNA by promoting its recognition by IF2 and preventing the misappropriation of this tRNA by the elongation apparatus. The protein is Methionyl-tRNA formyltransferase of Bartonella quintana (strain Toulouse) (Rochalimaea quintana).